Here is a 504-residue protein sequence, read N- to C-terminus: MPGVEKSSQNESRLLLVSNRLPITIKRSEDGKYDFSMSSGGLVSGLSGLSKTTTFQWYGWPGLEVPEEEIPTLKNRLKEEYNAIPVFIDDELADRHYNGFSNSILWPLFHYHPGEITFDESAWEAYKEANRLFAQAVASQVQDGDLIWVHDYHLMLLPEMLREEIGNTKKNIKIGFFLHTPFPSSEIYRILPVRNELLLGLLHCDLIGFHTYDYTRHFLSACSRLLGLPTTPNGIEFQGKIIACGAFPIGIDPEKFKEGLKKEKVQKRIATLEQKFQGVKLMVGVDRLDYIKGVPQKLHALEVFLSDHPEWVGKVVLVQVAVPSRQDVEEYQNLRAVVNELVGRINGKFGTVEFMPIHFLHKSVNFDELIALYAVSDACVVSSTRDGMNLVSYEYIATQEKRHGSLVLSEFAGAAQSLNGSIIVNPWNTEELAAAYHEAVTMSDEQRALNFSKLDKYVNKYTSAFWGQSFVTELTRISEQAAGKLPTKETPVNGETSKLETSSQ.

The D-glucose 6-phosphate site is built by Tyr97 and Asp151. UDP is bound by residues Arg287 and Lys292. Residues Arg287 and Lys292 each coordinate UDP-alpha-D-glucose. Arg325 is a D-glucose 6-phosphate binding site. UDP-alpha-D-glucose is bound at residue 386-394; it reads DGMNLVSYE. 390-394 serves as a coordination point for UDP; it reads LVSYE. The tract at residues 482-504 is disordered; that stretch reads AGKLPTKETPVNGETSKLETSSQ. Positions 493–504 are enriched in polar residues; it reads NGETSKLETSSQ.

This sequence belongs to the glycosyltransferase 20 family.

The enzyme catalyses D-glucose 6-phosphate + UDP-alpha-D-glucose = alpha,alpha-trehalose 6-phosphate + UDP + H(+). Its pathway is carbohydrate biosynthesis. Its function is as follows. Synthase catalytic subunit of the trehalose synthase complex that catalyzes the production of trehalose from glucose-6-phosphate and UDP-alpha-D-glucose in a two step process. In Emericella nidulans (strain FGSC A4 / ATCC 38163 / CBS 112.46 / NRRL 194 / M139) (Aspergillus nidulans), this protein is Alpha,alpha-trehalose-phosphate synthase [UDP-forming] (tpsA).